A 644-amino-acid chain; its full sequence is ATP-dependent zinc metalloprotease FtsH (644 aa).

Residues 1–4 lie on the Cytoplasmic side of the membrane; the sequence is MAKN. The chain crosses the membrane as a helical span at residues 5-25; that stretch reads LILWLVIAVVLMSVFQSFGPS. At 26-98 the chain is on the periplasmic side; the sequence is ESNGRKVDYS…VGEPPEEPSL (73 aa). Residues 99–119 traverse the membrane as a helical segment; that stretch reads LASIFISWFPMLLLIGVWIFF. Residues 120–644 are Cytoplasmic-facing; it reads MRQMQGGGGK…NTMSEQLGDK (525 aa). 192–199 serves as a coordination point for ATP; it reads GPPGTGKT. His414 serves as a coordination point for Zn(2+). Residue Glu415 is part of the active site. Residues His418 and Asp492 each contribute to the Zn(2+) site. Residues 599–644 form a disordered region; the sequence is RPPAGWEDPNGTNNSDSNGTPQAPRPVDEPRTPNPGNTMSEQLGDK. 2 stretches are compositionally biased toward polar residues: residues 608–619 and 632–644; these read NGTNNSDSNGTP and NPGN…LGDK.

It in the central section; belongs to the AAA ATPase family. In the C-terminal section; belongs to the peptidase M41 family. Homohexamer. The cofactor is Zn(2+).

Its subcellular location is the cell inner membrane. Its function is as follows. Acts as a processive, ATP-dependent zinc metallopeptidase for both cytoplasmic and membrane proteins. Plays a role in the quality control of integral membrane proteins. The chain is ATP-dependent zinc metalloprotease FtsH from Salmonella typhi.